A 129-amino-acid chain; its full sequence is Small ribosomal subunit protein uS9 (129 aa).

Residues 97-129 form a disordered region; that stretch reads LKAQGFLTRDPRKKERKKYGRKKARKSFQFSKR. Positions 110–129 are enriched in basic residues; sequence KERKKYGRKKARKSFQFSKR.

This sequence belongs to the universal ribosomal protein uS9 family.

This Chlamydia trachomatis serovar A (strain ATCC VR-571B / DSM 19440 / HAR-13) protein is Small ribosomal subunit protein uS9.